The sequence spans 503 residues: ATP synthase subunit alpha (503 aa).

Residue 169–176 (GDRKTGKT) coordinates ATP.

The protein belongs to the ATPase alpha/beta chains family. In terms of assembly, F-type ATPases have 2 components, CF(1) - the catalytic core - and CF(0) - the membrane proton channel. CF(1) has five subunits: alpha(3), beta(3), gamma(1), delta(1), epsilon(1). CF(0) has three main subunits: a(1), b(2) and c(9-12). The alpha and beta chains form an alternating ring which encloses part of the gamma chain. CF(1) is attached to CF(0) by a central stalk formed by the gamma and epsilon chains, while a peripheral stalk is formed by the delta and b chains.

The protein resides in the cell membrane. The enzyme catalyses ATP + H2O + 4 H(+)(in) = ADP + phosphate + 5 H(+)(out). Its function is as follows. Produces ATP from ADP in the presence of a proton gradient across the membrane. The alpha chain is a regulatory subunit. This Lactobacillus delbrueckii subsp. bulgaricus (strain ATCC BAA-365 / Lb-18) protein is ATP synthase subunit alpha.